Reading from the N-terminus, the 141-residue chain is UPF0310 protein Mflv_0785 (141 aa).

This sequence belongs to the UPF0310 family.

The sequence is that of UPF0310 protein Mflv_0785 from Mycolicibacterium gilvum (strain PYR-GCK) (Mycobacterium gilvum (strain PYR-GCK)).